Reading from the N-terminus, the 592-residue chain is Vacuolin-B (592 aa).

The span at 1–30 (MIESSSFMKKTSSENSIGSRSNIHEASTFS) shows a compositional bias: polar residues. Residues 1-35 (MIESSSFMKKTSSENSIGSRSNIHEASTFSSEHEN) are disordered. Residues 480–534 (KTTEARLKAETDNIALEQKGKAIIAEAQAKLESAQKQAQALLITAEAQKKVQEMQ) are a coiled coil. The segment at 491–555 (DNIALEQKGK…EIELAKIKSE (65 aa)) is oligomerization domain.

This sequence belongs to the vacuolin family. As to quaternary structure, homotrimer.

It is found in the endosome membrane. The protein localises to the lysosome membrane. Functionally, negative regulator of late steps of the endocytic pathway. The chain is Vacuolin-B (vacB) from Dictyostelium discoideum (Social amoeba).